Consider the following 215-residue polypeptide: Ependymin (215 aa).

An N-terminal signal peptide occupies residues 1–20 (MHTVKLLCVVFSCLCAVAWA). N-linked (GlcNAc...) asparagine glycans are attached at residues Asn71 and Asn94.

This sequence belongs to the ependymin family. As to quaternary structure, forms disulfide-linked dimers. Post-translationally, binds calcium through the terminal sialic acids. EPDs are synthesized in the meninx and secreted in the cerebrospinal fluid.

It localises to the secreted. Functionally, may play a role in neural plasticity. May be involved during axon regeneration. The sequence is that of Ependymin (epd) from Cyprinus carpio (Common carp).